The following is a 511-amino-acid chain: MSAPAVAAGPTAAGATAARPATTRVTILTGRRMTDLVLPAAVPMETYIDDTVAVLSEVLEDTPADVLGGFDFTAQGVWAFARPGSPPLKLDQSLDDAGVVDGSLLTLVSVSRTERYRPLVEDVIDAIAVLDESPEFDRTALNRFVGAAIPLLTAPVIGMAMRAWWETGRSLWWPLAIGILGIAVLVGSFVANRFYQSGHLAECLLVTTYLLIATAAALAVPLPRGVNSLGAPQVAGAATAVLFLTLMTRGGPRKRHELASFAVITAIAVIAAAAAFGYGYQDWVPAGGIAFGLFIVTNAAKLTVAVARIALPPIPVPGETVDNEELLDPVATPEATSEETPTWQAIIASVPASAVRLTERSKLAKQLLIGYVTSGTLILAAGAIAVVVRGHFFVHSLVVAGLITTVCGFRSRLYAERWCAWALLAATVAIPTGLTAKLIIWYPHYAWLLLSVYLTVALVALVVVGSMAHVRRVSPVVKRTLELIDGAMIAAIIPMLLWITGVYDTVRNIRF.

Ser-2 is subject to N-acetylserine. Over 2–143 the chain is Cytoplasmic; it reads SAPAVAAGPT…PEFDRTALNR (142 aa). Residues 144–164 form a helical membrane-spanning segment; sequence FVGAAIPLLTAPVIGMAMRAW. The Periplasmic portion of the chain corresponds to 165–170; the sequence is WETGRS. The chain crosses the membrane as a helical span at residues 171-191; it reads LWWPLAIGILGIAVLVGSFVA. The Cytoplasmic portion of the chain corresponds to 192 to 202; it reads NRFYQSGHLAE. A helical transmembrane segment spans residues 203-223; that stretch reads CLLVTTYLLIATAAALAVPLP. Topologically, residues 224-227 are periplasmic; it reads RGVN. A helical transmembrane segment spans residues 228–248; sequence SLGAPQVAGAATAVLFLTLMT. The Cytoplasmic portion of the chain corresponds to 249–257; the sequence is RGGPRKRHE. The helical transmembrane segment at 258–278 threads the bilayer; sequence LASFAVITAIAVIAAAAAFGY. Over 279 to 285 the chain is Periplasmic; that stretch reads GYQDWVP. Residues 286 to 306 form a helical membrane-spanning segment; sequence AGGIAFGLFIVTNAAKLTVAV. Residues 307 to 367 lie on the Cytoplasmic side of the membrane; that stretch reads ARIALPPIPV…TERSKLAKQL (61 aa). 2 consecutive transmembrane segments (helical) span residues 368–388 and 389–409; these read LIGY…AVVV and RGHF…VCGF. At 410–420 the chain is on the cytoplasmic side; sequence RSRLYAERWCA. Residues 421 to 441 traverse the membrane as a helical segment; sequence WALLAATVAIPTGLTAKLIIW. Topologically, residues 442-444 are periplasmic; it reads YPH. The helical transmembrane segment at 445 to 465 threads the bilayer; that stretch reads YAWLLLSVYLTVALVALVVVG. Over 466 to 482 the chain is Cytoplasmic; it reads SMAHVRRVSPVVKRTLE. The helical transmembrane segment at 483–503 threads the bilayer; sequence LIDGAMIAAIIPMLLWITGVY. The Periplasmic segment spans residues 504–511; that stretch reads DTVRNIRF.

Belongs to the EccD/Snm4 family. In terms of assembly, possibly a homodimer. Part of the ESX-1 / type VII secretion system (T7SS), which is composed of cytosolic and membrane components. The ESX-1 membrane complex is composed of EccB1, EccCa1, EccCb1, EccD1 and EccE1.

It is found in the cell inner membrane. Its function is as follows. Part of the ESX-1 specialized secretion system, which delivers several virulence factors to host cells during infection, including the key virulence factors EsxA (ESAT-6) and EsxB (CFP-10). In Mycobacterium tuberculosis (strain ATCC 25618 / H37Rv), this protein is ESX-1 secretion system protein EccD1.